Here is a 579-residue protein sequence, read N- to C-terminus: Cyclin-T1-5 (579 aa).

Disordered regions lie at residues 1–27 (MAGV…HEKQ) and 271–419 (RVPA…GDAL). Polar residues predominate over residues 11-20 (YSESGVSSHS). The segment covering 274-283 (ASQGSEVESS) has biased composition (low complexity). Polar residues predominate over residues 306–334 (SRQTSSVRSTHEQSNSDNHGGSSKGVLNQ). Basic and acidic residues-rich tracts occupy residues 349-380 (DNKE…EAPH) and 389-414 (PGKD…RNVD). At Ser-423 the chain carries Phosphoserine. Composition is skewed to basic and acidic residues over residues 474–512 (DEKT…KNTE), 538–556 (KQSE…ESHK), and 563–579 (HHGD…NNHS). Residues 474–579 (DEKTKERKVQ…RRHSQENNHS (106 aa)) are disordered.

It belongs to the cyclin family. Cyclin T subfamily.

The sequence is that of Cyclin-T1-5 (CYCT1-5) from Arabidopsis thaliana (Mouse-ear cress).